A 386-amino-acid polypeptide reads, in one-letter code: 8-amino-7-oxononanoate synthase (386 aa).

Arginine 19 provides a ligand contact to substrate. 106–107 (GY) serves as a coordination point for pyridoxal 5'-phosphate. Histidine 131 lines the substrate pocket. Positions 177, 205, and 233 each coordinate pyridoxal 5'-phosphate. The residue at position 236 (lysine 236) is an N6-(pyridoxal phosphate)lysine. Residue threonine 350 coordinates substrate.

The protein belongs to the class-II pyridoxal-phosphate-dependent aminotransferase family. BioF subfamily. As to quaternary structure, homodimer. Pyridoxal 5'-phosphate serves as cofactor.

The catalysed reaction is 6-carboxyhexanoyl-[ACP] + L-alanine + H(+) = (8S)-8-amino-7-oxononanoate + holo-[ACP] + CO2. The protein operates within cofactor biosynthesis; biotin biosynthesis. Catalyzes the decarboxylative condensation of pimeloyl-[acyl-carrier protein] and L-alanine to produce 8-amino-7-oxononanoate (AON), [acyl-carrier protein], and carbon dioxide. In Alcanivorax borkumensis (strain ATCC 700651 / DSM 11573 / NCIMB 13689 / SK2), this protein is 8-amino-7-oxononanoate synthase.